A 90-amino-acid chain; its full sequence is Probable Fe(2+)-trafficking protein (90 aa).

Belongs to the Fe(2+)-trafficking protein family. As to quaternary structure, monomer.

Could be a mediator in iron transactions between iron acquisition and iron-requiring processes, such as synthesis and/or repair of Fe-S clusters in biosynthetic enzymes. This is Probable Fe(2+)-trafficking protein from Pectobacterium carotovorum subsp. carotovorum (strain PC1).